The primary structure comprises 700 residues: Elongation factor G 1 (700 aa).

Positions 8 to 290 (QNYRNIGISA…AVIEFMPSPI (283 aa)) constitute a tr-type G domain. Residues 17 to 24 (AHIDAGKT), 88 to 92 (DTPGH), and 142 to 145 (NKMD) each bind GTP.

It belongs to the TRAFAC class translation factor GTPase superfamily. Classic translation factor GTPase family. EF-G/EF-2 subfamily.

The protein resides in the cytoplasm. Functionally, catalyzes the GTP-dependent ribosomal translocation step during translation elongation. During this step, the ribosome changes from the pre-translocational (PRE) to the post-translocational (POST) state as the newly formed A-site-bound peptidyl-tRNA and P-site-bound deacylated tRNA move to the P and E sites, respectively. Catalyzes the coordinated movement of the two tRNA molecules, the mRNA and conformational changes in the ribosome. In Polaromonas sp. (strain JS666 / ATCC BAA-500), this protein is Elongation factor G 1.